We begin with the raw amino-acid sequence, 413 residues long: Putative F-box/kelch-repeat protein At4g22430 (413 aa).

One can recognise an F-box domain in the interval 5–54 (NNTITDVLEGIVTEILVRLPLRSISRFKSVSQTWKSAIESVYFRRLFVSL). Residues 168 to 210 (NMFLNKGEMYMPLYVYSSETGFWIHKEVVCPVRLPNFYDPISL) form a Kelch repeat.

The sequence is that of Putative F-box/kelch-repeat protein At4g22430 from Arabidopsis thaliana (Mouse-ear cress).